The primary structure comprises 631 residues: Probable potassium transport system protein Kup (631 aa).

The next 12 helical transmembrane spans lie at 17 to 37 (IGLLIAAVGVVYGDIGTSPLY), 56 to 76 (ILGVLSLIFWSLIWVVSFKYM), 109 to 129 (MMMVVFGLFGAALFYGDSMIT), 147 to 167 (GLDHWIVPMALVVLVGLFLIQ), 174 to 194 (IGVLFGPVMVVWFLVLGALGV), 215 to 235 (FFIIHPGIGVAILGAVVLALT), 256 to 276 (WFILVLPALLLNYFGQGALVL), 288 to 308 (LLAPSWALLPLIGLSTMATII), 346 to 366 (IYIGAVNWALMVGVIMLVIGF), 378 to 398 (VAVTGTMLCTTILVSTVMLML), 403 to 423 (PLLAVPLLICLLLVDGLFFAA), and 428 to 448 (IFQGGAFPVLAGAVLFILMTT).

The protein belongs to the HAK/KUP transporter (TC 2.A.72) family.

It localises to the cell inner membrane. The catalysed reaction is K(+)(in) + H(+)(in) = K(+)(out) + H(+)(out). In terms of biological role, transport of potassium into the cell. Likely operates as a K(+):H(+) symporter. The sequence is that of Probable potassium transport system protein Kup from Pseudomonas syringae pv. tomato (strain ATCC BAA-871 / DC3000).